The following is a 97-amino-acid chain: Putative septation protein SpoVG (97 aa).

The protein belongs to the SpoVG family.

Its function is as follows. Essential for sporulation. Interferes with or is a negative regulator of the pathway leading to asymmetric septation. In Bacillus licheniformis (strain ATCC 14580 / DSM 13 / JCM 2505 / CCUG 7422 / NBRC 12200 / NCIMB 9375 / NCTC 10341 / NRRL NRS-1264 / Gibson 46), this protein is Putative septation protein SpoVG.